Here is a 405-residue protein sequence, read N- to C-terminus: Serine--glyoxylate aminotransferase (405 aa).

N6-(pyridoxal phosphate)lysine is present on lysine 196.

This sequence belongs to the class-V pyridoxal-phosphate-dependent aminotransferase family. The cofactor is pyridoxal 5'-phosphate.

It carries out the reaction glyoxylate + L-serine = 3-hydroxypyruvate + glycine. Its pathway is one-carbon metabolism; formaldehyde assimilation via serine pathway. In Hyphomicrobium methylovorum, this protein is Serine--glyoxylate aminotransferase (sgaA).